Reading from the N-terminus, the 363-residue chain is MSRPQFDPSAYAAQLEDKKSRLAGLLAPFAAPAPEVFESPREHYRLRAEFRLWRETGNEKRHYAMFEQGDKHTPILLEDFPIASRRINELMPRLKAAWADPALGFKLFQVEFLTTLAGDALITLCYHRPIDDAWRQAAEKLAAELGVNLVGRSRGKRIVVGRDYVEEELSVAGRRFRYRQPEGAFTQPNGEVNQKMLGWAYEALGQRDDDLLELYCGNGNFTLPLATRVRKVLATEISKSSVNAALANLADNAVDNVSLVRLSAEELTQALNEVRPFRRLADIDLKSYAFGSVFVDPPRAGMDPDTCELARRFERILYISCNPETLAQNIAQLHDTHRISRCALFDQFPYTHHMESGVLLERR.

S-adenosyl-L-methionine is bound by residues Gln-187, Tyr-215, Asn-220, Glu-236, and Asp-296. The Nucleophile role is filled by Cys-321. Residue Glu-355 is the Proton acceptor of the active site.

It belongs to the class I-like SAM-binding methyltransferase superfamily. RNA M5U methyltransferase family. TrmA subfamily.

It catalyses the reaction uridine(54) in tRNA + S-adenosyl-L-methionine = 5-methyluridine(54) in tRNA + S-adenosyl-L-homocysteine + H(+). It carries out the reaction uridine(341) in tmRNA + S-adenosyl-L-methionine = 5-methyluridine(341) in tmRNA + S-adenosyl-L-homocysteine + H(+). Functionally, dual-specificity methyltransferase that catalyzes the formation of 5-methyluridine at position 54 (m5U54) in all tRNAs, and that of position 341 (m5U341) in tmRNA (transfer-mRNA). This is tRNA/tmRNA (uracil-C(5))-methyltransferase from Pseudomonas aeruginosa (strain ATCC 15692 / DSM 22644 / CIP 104116 / JCM 14847 / LMG 12228 / 1C / PRS 101 / PAO1).